We begin with the raw amino-acid sequence, 425 residues long: UDP-sugar transporter protein SLC35A5 (425 aa).

The Cytoplasmic segment spans residues 1–7; the sequence is MESNCGH. A helical transmembrane segment spans residues 8–28; that stretch reads PMLSVSSAMYTFLLGAIFITL. Residues 29 to 52 are Lumenal-facing; the sequence is SSSRILLVKYSANEENKYDYLPTT. Residues 53 to 73 form a helical membrane-spanning segment; that stretch reads VNVCSELVKLVFCALVSFWVL. The Cytoplasmic segment spans residues 74-92; sequence KKEDHQNRKLRCGSWKEFF. The chain crosses the membrane as a helical span at residues 93–115; sequence NFMKWSIPAFLYFLDNLIVFYVL. Residues 116–119 lie on the Lumenal side of the membrane; that stretch reads SYLQ. A helical transmembrane segment spans residues 120-142; sequence PAMAVIFSNFSIITTALLFRIVL. Residues 143–147 are Cytoplasmic-facing; sequence KRHLN. A helical transmembrane segment spans residues 148 to 168; it reads GIQWASLLILFLSIVALTSGT. Residues 169–228 are Lumenal-facing; sequence ETSQHSLAGHGFHHDALFSPSNSCLLFRSECPRKDNCTAKEWTFSEAQWNTTARVFSHIR. Asn-204 and Asn-218 each carry an N-linked (GlcNAc...) asparagine glycan. A helical membrane pass occupies residues 229–249; it reads LGLGHVLIIVQCFISSMANIY. Topologically, residues 250 to 263 are cytoplasmic; the sequence is NEKILKEGNQLTES. A helical transmembrane segment spans residues 264-284; that stretch reads IFVQNSKLYFFGVLFNGLTLG. Residues 285–303 are Lumenal-facing; that stretch reads LQSGNRDQIKNCGIFYGHN. The helical transmembrane segment at 304 to 324 threads the bilayer; the sequence is AFSVALIFVTAFQGLSVAFIL. The Cytoplasmic segment spans residues 325 to 330; the sequence is KFLDNM. The chain crosses the membrane as a helical span at residues 331–351; the sequence is FHVLMAQVTTVVITTVSVLVF. At 352-354 the chain is on the lumenal side; it reads DFR. Residues 355–375 form a helical membrane-spanning segment; the sequence is PSLEFFLEAPSVLLSILIYNA. Over 376–425 the chain is Cytoplasmic; the sequence is SNPQGVENVPRKERIRDLSGTLWERSSGDGEELERLTKPKSDIESDEDTF. Phosphoserine occurs at positions 394, 416, and 420. The segment at 398-425 is disordered; it reads WERSSGDGEELERLTKPKSDIESDEDTF. A compositionally biased stretch (basic and acidic residues) spans 408–418; that stretch reads LERLTKPKSDI.

Belongs to the nucleotide-sugar transporter family. SLC35A subfamily. In terms of assembly, probably forms homooligomers and heterooligomers with SLC35A1, SLC35A2, SLC35A3 and SLC35A4.

It localises to the golgi apparatus membrane. The catalysed reaction is UMP(out) + UDP-alpha-D-glucuronate(in) = UMP(in) + UDP-alpha-D-glucuronate(out). It catalyses the reaction UMP(out) + UDP-N-acetyl-alpha-D-glucosamine(in) = UMP(in) + UDP-N-acetyl-alpha-D-glucosamine(out). The enzyme catalyses UDP-N-acetyl-alpha-D-galactosamine(in) + UMP(out) = UDP-N-acetyl-alpha-D-galactosamine(out) + UMP(in). Functionally, probable UDP-sugar:UMP transmembrane antiporter involved in UDP-alpha-D-glucuronate/UDP-GlcA, UDP-GlcNAc/UDP-N-acetyl-alpha-D-glucosamine and UDP-N-acetyl-alpha-D-galactosamine/UDP-GalNAc transport from the cytosol to the lumen of the Golgi. The sequence is that of UDP-sugar transporter protein SLC35A5 from Bos taurus (Bovine).